The chain runs to 265 residues: Mlc titration factor A (265 aa).

Zn(2+) is bound by residues histidine 111, histidine 148, histidine 152, and glutamate 211.

It belongs to the MtfA family. In terms of assembly, interacts with Mlc. It depends on Zn(2+) as a cofactor.

The protein localises to the cytoplasm. Its function is as follows. Involved in the modulation of the activity of the glucose-phosphotransferase system (glucose-PTS). Interacts with the transcriptional repressor Mlc, preventing its interaction with DNA and leading to the modulation of expression of genes regulated by Mlc, including ptsG, which encodes the PTS system glucose-specific EIICB component. In terms of biological role, shows zinc-dependent metallopeptidase activity. In Escherichia fergusonii (strain ATCC 35469 / DSM 13698 / CCUG 18766 / IAM 14443 / JCM 21226 / LMG 7866 / NBRC 102419 / NCTC 12128 / CDC 0568-73), this protein is Mlc titration factor A.